A 936-amino-acid chain; its full sequence is Protein translocase subunit SecA (936 aa).

Residues Gln87, 105–109, and Asp515 each bind ATP; that span reads GEGKT. Residues Cys920, Cys922, Cys931, and His932 each contribute to the Zn(2+) site.

Belongs to the SecA family. In terms of assembly, monomer and homodimer. Part of the essential Sec protein translocation apparatus which comprises SecA, SecYEG and auxiliary proteins SecDF-YajC and YidC. Requires Zn(2+) as cofactor.

The protein resides in the cell inner membrane. It is found in the cytoplasm. The enzyme catalyses ATP + H2O + cellular proteinSide 1 = ADP + phosphate + cellular proteinSide 2.. Part of the Sec protein translocase complex. Interacts with the SecYEG preprotein conducting channel. Has a central role in coupling the hydrolysis of ATP to the transfer of proteins into and across the cell membrane, serving both as a receptor for the preprotein-SecB complex and as an ATP-driven molecular motor driving the stepwise translocation of polypeptide chains across the membrane. The protein is Protein translocase subunit SecA of Paraburkholderia phytofirmans (strain DSM 17436 / LMG 22146 / PsJN) (Burkholderia phytofirmans).